A 525-amino-acid polypeptide reads, in one-letter code: Lysine--tRNA ligase (525 aa).

Mg(2+) is bound by residues Glu-430 and Glu-437.

This sequence belongs to the class-II aminoacyl-tRNA synthetase family. In terms of assembly, homodimer. The cofactor is Mg(2+).

It is found in the cytoplasm. It carries out the reaction tRNA(Lys) + L-lysine + ATP = L-lysyl-tRNA(Lys) + AMP + diphosphate. This is Lysine--tRNA ligase from Chlamydia caviae (strain ATCC VR-813 / DSM 19441 / 03DC25 / GPIC) (Chlamydophila caviae).